The primary structure comprises 438 residues: MHPLPGYWSCYCLLLLFSLGVQGSLGAPSAAPEQVHLSYPGEPGSMTVTWTTWVPTRSEVQFGLQPSGPLPLRAQGTFVPFVDGGILRRKLYIHRVTLRKLLPGVQYVYRCGSAQGWSRRFRFRALKNGAHWSPRLAVFGDLGADNPKAVPRLRRDTQQGMYDAVLHVGDFAYNLDQDNARVGDRFMRLIEPVAASLPYMTCPGNHEERYNFSNYKARFSMPGDNEGLWYSWDLGPAHIISFSTEVYFFLHYGRHLVQRQFRWLESDLQKANKNRAARPWIITMGHRPMYCSNADLDDCTRHESKVRKGLQGKLYGLEDLFYKYGVDLQLWAHEHSYERLWPIYNYQVFNGSREMPYTNPRGPVHIITGSAGCEERLTPFAVFPRPWSAVRVKEYGYTRLHILNGTHIHIQQVSDDQDGKIVDDVWVVRPLFGRRMYL.

An N-terminal signal peptide occupies residues M1–G26. Residues D141, D170, and Y173 each contribute to the Fe cation site. D170 provides a ligand contact to Zn(2+). N205 contributes to the Zn(2+) binding site. N-linked (GlcNAc...) asparagine glycosylation occurs at N211. Zn(2+)-binding residues include H286 and H333. Residue H335 participates in Fe cation binding. Residues N350 and N404 are each glycosylated (N-linked (GlcNAc...) asparagine).

The protein belongs to the metallophosphoesterase superfamily. Purple acid phosphatase family. The cofactor is Fe cation. It depends on Zn(2+) as a cofactor.

Its subcellular location is the secreted. The enzyme catalyses a phosphate monoester + H2O = an alcohol + phosphate. This Homo sapiens (Human) protein is Acid phosphatase type 7.